The chain runs to 159 residues: Cyclic pyranopterin monophosphate synthase (159 aa).

Substrate-binding positions include 75–77 and 113–114; these read LCH and ME. The active site involves aspartate 128.

It belongs to the MoaC family. Homohexamer; trimer of dimers.

The catalysed reaction is (8S)-3',8-cyclo-7,8-dihydroguanosine 5'-triphosphate = cyclic pyranopterin phosphate + diphosphate. Its pathway is cofactor biosynthesis; molybdopterin biosynthesis. Functionally, catalyzes the conversion of (8S)-3',8-cyclo-7,8-dihydroguanosine 5'-triphosphate to cyclic pyranopterin monophosphate (cPMP). The protein is Cyclic pyranopterin monophosphate synthase of Cereibacter sphaeroides (strain ATCC 17029 / ATH 2.4.9) (Rhodobacter sphaeroides).